Consider the following 280-residue polypeptide: Adenosylcobinamide-GDP ribazoletransferase (280 aa).

The next 7 membrane-spanning stretches (helical) occupy residues 4 to 24 (YLLA…GITM), 34 to 54 (IFFY…VAYA), 58 to 78 (VFPG…ITGF), 108 to 128 (TLGT…YGSI), 136 to 156 (IAAF…IAEV), 197 to 217 (LIGF…IGLI), and 254 to 274 (ITAL…YLGG).

Belongs to the CobS family. It depends on Mg(2+) as a cofactor.

It localises to the cell membrane. It carries out the reaction alpha-ribazole + adenosylcob(III)inamide-GDP = adenosylcob(III)alamin + GMP + H(+). The enzyme catalyses alpha-ribazole 5'-phosphate + adenosylcob(III)inamide-GDP = adenosylcob(III)alamin 5'-phosphate + GMP + H(+). It functions in the pathway cofactor biosynthesis; adenosylcobalamin biosynthesis; adenosylcobalamin from cob(II)yrinate a,c-diamide: step 7/7. Its function is as follows. Joins adenosylcobinamide-GDP and alpha-ribazole to generate adenosylcobalamin (Ado-cobalamin). Also synthesizes adenosylcobalamin 5'-phosphate from adenosylcobinamide-GDP and alpha-ribazole 5'-phosphate. This chain is Adenosylcobinamide-GDP ribazoletransferase, found in Methanosarcina mazei (strain ATCC BAA-159 / DSM 3647 / Goe1 / Go1 / JCM 11833 / OCM 88) (Methanosarcina frisia).